We begin with the raw amino-acid sequence, 1336 residues long: Putative botulinum-like toxin Wo (1336 aa).

The interval 1–476 (MDVLEMFDVN…VAGMQRMVSL (476 aa)) is has protease activity. Position 250 (His-250) interacts with Zn(2+). Glu-251 is a catalytic residue. Zn(2+)-binding residues include His-254 and Glu-296.

Belongs to the peptidase M27 family. Requires Zn(2+) as cofactor.

The enzyme catalyses Limited hydrolysis of proteins of the neuroexocytosis apparatus, synaptobrevins, SNAP25 or syntaxin. No detected action on small molecule substrates.. With respect to regulation, inhibited by EDTA and 1,10-phenanthroline. Its function is as follows. When overexpressed the N-terminus (residues 1-476) cleaves rat synaptobrevin-2/VAMP2 between '89-Trp-|-Trp-90' in vitro. This releases the cytoplasmic domain of VAMP2 from the synaptic vesicle membrane, which would prevent the assembly of the trans-SNARE complex on the membrane and thus prevent vesicle-target membrane fusion and neurotransmitter release. The chain is Putative botulinum-like toxin Wo from Weissella oryzae (strain DSM 25784 / JCM 18191 / LMG 30913 / SG25).